A 208-amino-acid polypeptide reads, in one-letter code: Thymidylate kinase (208 aa).

11–18 (GIEGAGKT) is an ATP binding site.

This sequence belongs to the thymidylate kinase family.

It catalyses the reaction dTMP + ATP = dTDP + ADP. Phosphorylation of dTMP to form dTDP in both de novo and salvage pathways of dTTP synthesis. The sequence is that of Thymidylate kinase from Hahella chejuensis (strain KCTC 2396).